We begin with the raw amino-acid sequence, 424 residues long: Serine--tRNA ligase (424 aa).

231–233 serves as a coordination point for L-serine; sequence TAE. 262-264 is an ATP binding site; the sequence is RSE. Glu-285 is an L-serine binding site. 349–352 lines the ATP pocket; sequence EISS. Residue Ser-385 coordinates L-serine.

Belongs to the class-II aminoacyl-tRNA synthetase family. Type-1 seryl-tRNA synthetase subfamily. As to quaternary structure, homodimer. The tRNA molecule binds across the dimer.

It localises to the cytoplasm. The catalysed reaction is tRNA(Ser) + L-serine + ATP = L-seryl-tRNA(Ser) + AMP + diphosphate + H(+). It catalyses the reaction tRNA(Sec) + L-serine + ATP = L-seryl-tRNA(Sec) + AMP + diphosphate + H(+). Its pathway is aminoacyl-tRNA biosynthesis; selenocysteinyl-tRNA(Sec) biosynthesis; L-seryl-tRNA(Sec) from L-serine and tRNA(Sec): step 1/1. In terms of biological role, catalyzes the attachment of serine to tRNA(Ser). Is also able to aminoacylate tRNA(Sec) with serine, to form the misacylated tRNA L-seryl-tRNA(Sec), which will be further converted into selenocysteinyl-tRNA(Sec). In Bacillus cereus (strain AH187), this protein is Serine--tRNA ligase.